The sequence spans 326 residues: MSCAEVMYHPQPYGAPQYLPNPVAAATCPTACYHPAPQPGQQKKLAVYSKMQDSLEVTLPSKQEEEEEEEEDEEEEEKDQPAEMEYLNSRCVLFTYFQGDIGSVVDEHFSRALGQANTLHPESAISKSKMGLTPLWRDSSALSSQRSNFPTSFWTSSYQPPPAPCLGGVHPDFQVTAPHGTFTTADPNSWPGHGLHQTGPAPPPTASESWHYPLASQVSPSYSHMHDMYLRHHHPHAHVHHRHHHHHHPTAGSALDPAYGHLLMPSVRAARIPAPQCDITKTDLTTVTTATSAWAGAFHGTVDIVPSVGFDTGLQHQDKSKESTWY.

The disordered stretch occupies residues serine 54–alanine 82. Lysine 62 is covalently cross-linked (Glycyl lysine isopeptide (Lys-Gly) (interchain with G-Cter in SUMO2)). The segment covering glutamate 64 to lysine 78 has biased composition (acidic residues). A Glycyl lysine isopeptide (Lys-Gly) (interchain with G-Cter in SUMO2) cross-link involves residue lysine 129. The segment at threonine 184–glutamate 208 is disordered.

The protein belongs to the vestigial family.

It is found in the nucleus. In terms of biological role, may act as a specific coactivator for the mammalian TEFs. This is Transcription cofactor vestigial-like protein 3 from Mus musculus (Mouse).